The following is a 106-amino-acid chain: MSYLIPGELIPEDGFIELNKGRETTTLKVANTSDRPIQIGSHYHFFESNKGLEFDRKKSLGKRLDIPAGTAIRFEPGDQREVNLVPYAGDRKIFGFNGLINNSLQQ.

Belongs to the urease beta subunit family. As to quaternary structure, heterotrimer of UreA (gamma), UreB (beta) and UreC (alpha) subunits. Three heterotrimers associate to form the active enzyme.

Its subcellular location is the cytoplasm. The enzyme catalyses urea + 2 H2O + H(+) = hydrogencarbonate + 2 NH4(+). It participates in nitrogen metabolism; urea degradation; CO(2) and NH(3) from urea (urease route): step 1/1. The chain is Urease subunit beta from Prochlorococcus marinus (strain NATL1A).